A 206-amino-acid chain; its full sequence is Small ribosomal subunit protein uS4A (206 aa).

Residues 98-163 (MRLDNVVYRL…SERFKMFAEN (66 aa)) enclose the S4 RNA-binding domain.

This sequence belongs to the universal ribosomal protein uS4 family. As to quaternary structure, part of the 30S ribosomal subunit. Contacts protein S5. The interaction surface between S4 and S5 is involved in control of translational fidelity.

Functionally, one of the primary rRNA binding proteins, it binds directly to 16S rRNA where it nucleates assembly of the body of the 30S subunit. In terms of biological role, with S5 and S12 plays an important role in translational accuracy. The sequence is that of Small ribosomal subunit protein uS4A from Clostridium perfringens (strain ATCC 13124 / DSM 756 / JCM 1290 / NCIMB 6125 / NCTC 8237 / Type A).